We begin with the raw amino-acid sequence, 253 residues long: Histone-arginine methyltransferase METTL23 (253 aa).

The tract at residues 1-23 (MDSVRPRAPWAPPPDPASLDSPT) is disordered.

It belongs to the methyltransferase superfamily. METTL23 family. As to quaternary structure, interacts with HSPA5, HSP90B1, TUBULIN, UGGT1 and UGGT2. Interacts with TET3. Interacts with STPG4. Ubiquitously expressed.

It is found in the nucleus. Its subcellular location is the cytoplasm. The catalysed reaction is L-arginyl-[protein] + 2 S-adenosyl-L-methionine = N(omega),N(omega)-dimethyl-L-arginyl-[protein] + 2 S-adenosyl-L-homocysteine + 2 H(+). In terms of biological role, histone methyltransferase that dimethylates histone H3 at 'Arg-17', forming asymmetric dimethylarginine (H3R17me2a), leading to activate transcription via chromatin remodeling. Maternal factor involved in epigenetic chromatin reprogramming of the paternal genome in the zygote: mediates H3R17me2a, promoting histone H3.3 incorporation in the male pronucleus, leading to TET3 recruitment and subsequent DNA demethylation. The sequence is that of Histone-arginine methyltransferase METTL23 from Mus musculus (Mouse).